We begin with the raw amino-acid sequence, 177 residues long: Small ribosomal subunit protein eS10z (177 aa).

Residues 90–177 (TLKKSAKPGG…AAAPSGSGFP (88 aa)) form a disordered region. The span at 108 to 140 (DRQRGPPRSDGDRPRFGDRDGYRGGPRGGDEKG) shows a compositional bias: basic and acidic residues. Over residues 141-150 (GAPADFQPSF) the composition is skewed to low complexity. The span at 151–165 (QGGGGRPGFGRGAGG) shows a compositional bias: gly residues. Positions 166-177 (YSAAAPSGSGFP) are enriched in low complexity.

Belongs to the eukaryotic ribosomal protein eS10 family.

Its subcellular location is the cytoplasm. The protein is Small ribosomal subunit protein eS10z (RPS10A) of Arabidopsis thaliana (Mouse-ear cress).